We begin with the raw amino-acid sequence, 657 residues long: Methionine--tRNA ligase (657 aa).

The 'HIGH' region motif lies at 13-23; it reads YYPSGNLHIGH. A 'KMSKS' region motif is present at residues 308–312; it reads KMSKS. Lys-311 provides a ligand contact to ATP. Positions 557 to 657 constitute a tRNA-binding domain; it reads DFDKVEIKAA…SAIPNGAVIK (101 aa).

The protein belongs to the class-I aminoacyl-tRNA synthetase family. MetG type 2B subfamily. Homodimer.

Its subcellular location is the cytoplasm. It carries out the reaction tRNA(Met) + L-methionine + ATP = L-methionyl-tRNA(Met) + AMP + diphosphate. In terms of biological role, is required not only for elongation of protein synthesis but also for the initiation of all mRNA translation through initiator tRNA(fMet) aminoacylation. This Staphylococcus aureus (strain MRSA252) protein is Methionine--tRNA ligase.